We begin with the raw amino-acid sequence, 329 residues long: MNENLNGILNVYKEAGWTSFDVVAKLRGILKTKKIGHGGTLDPSVTGVLPVAVGKSTRLLEYMEAAGKIYEGEVTIGFSTETEDADGEIVSKTPVERELTESEIDSVMKNFIGKIKQIPPMYSAVKINGKKLYEYARAGQTVDRPTREITIKSFVRTSPMMTDEAAGLVSFSFKVECSKGTYVRTLAVDLAEQLGYAGHMSKLQRTASNGLMIKDAVKLSEIEVAMEAGELSSLMYPAEYAVSDLPRVNLTADQFEMARVGKKFAEDDWVTDETTDSPVIKSNKSKFLLTDLSELTRDKFAAFYDDKLIAVYMKHPEKAGIWKPNKVLV.

The Nucleophile role is filled by Asp42.

Belongs to the pseudouridine synthase TruB family. Type 1 subfamily.

It catalyses the reaction uridine(55) in tRNA = pseudouridine(55) in tRNA. Its function is as follows. Responsible for synthesis of pseudouridine from uracil-55 in the psi GC loop of transfer RNAs. The chain is tRNA pseudouridine synthase B from Lactococcus lactis subsp. lactis (strain IL1403) (Streptococcus lactis).